The sequence spans 107 residues: Thioredoxin (107 aa).

The Thioredoxin domain maps to 2–107; sequence AGVLKNVTDD…ALLRPGPVPR (106 aa). A disulfide bridge connects residues Cys-33 and Cys-36.

It belongs to the thioredoxin family.

Component of the thioredoxin-thioredoxin reductase system. Participates in various redox reactions through the reversible oxidation of its active center dithiol to a disulfide and catalyzes dithiol-disulfide exchange reactions. The sequence is that of Thioredoxin (trxA) from Streptomyces clavuligerus.